The sequence spans 372 residues: 4-hydroxy-3-methylbut-2-en-1-yl diphosphate synthase (flavodoxin) (372 aa).

[4Fe-4S] cluster contacts are provided by cysteine 270, cysteine 273, cysteine 305, and glutamate 312.

The protein belongs to the IspG family. Requires [4Fe-4S] cluster as cofactor.

The enzyme catalyses (2E)-4-hydroxy-3-methylbut-2-enyl diphosphate + oxidized [flavodoxin] + H2O + 2 H(+) = 2-C-methyl-D-erythritol 2,4-cyclic diphosphate + reduced [flavodoxin]. The protein operates within isoprenoid biosynthesis; isopentenyl diphosphate biosynthesis via DXP pathway; isopentenyl diphosphate from 1-deoxy-D-xylulose 5-phosphate: step 5/6. In terms of biological role, converts 2C-methyl-D-erythritol 2,4-cyclodiphosphate (ME-2,4cPP) into 1-hydroxy-2-methyl-2-(E)-butenyl 4-diphosphate. The chain is 4-hydroxy-3-methylbut-2-en-1-yl diphosphate synthase (flavodoxin) from Idiomarina loihiensis (strain ATCC BAA-735 / DSM 15497 / L2-TR).